The following is a 194-amino-acid chain: ATP-dependent Clp protease proteolytic subunit (194 aa).

The active-site Nucleophile is the Ser-98. His-123 is an active-site residue.

Belongs to the peptidase S14 family. Fourteen ClpP subunits assemble into 2 heptameric rings which stack back to back to give a disk-like structure with a central cavity, resembling the structure of eukaryotic proteasomes.

The protein resides in the cytoplasm. The catalysed reaction is Hydrolysis of proteins to small peptides in the presence of ATP and magnesium. alpha-casein is the usual test substrate. In the absence of ATP, only oligopeptides shorter than five residues are hydrolyzed (such as succinyl-Leu-Tyr-|-NHMec, and Leu-Tyr-Leu-|-Tyr-Trp, in which cleavage of the -Tyr-|-Leu- and -Tyr-|-Trp bonds also occurs).. In terms of biological role, cleaves peptides in various proteins in a process that requires ATP hydrolysis. Has a chymotrypsin-like activity. Plays a major role in the degradation of misfolded proteins. This Syntrophus aciditrophicus (strain SB) protein is ATP-dependent Clp protease proteolytic subunit.